Consider the following 278-residue polypeptide: MEMLEEHRCFEGWQQRWRHDSSTLNCPMTFSIFLPPPRDHTPPPVLYWLSGLTCNDENFTTKAGAQRVAAELGIVLVMPDTSPRGEKVANDDGYDLGQGAGFYLNATQPPWATHYRMYDYLRDELPALVQSQFNVSDRCAISGHSMGGHGALIMALKNPGKYTSVSAFAPIVNPCSVPWGIKAFSSYLGEDKNAWLEWDSCALMYASNAQDAIPTLIDQGDNDQFLADQLQPAVLAEAARQKAWPMTLRIQPGYDHSYYFIASFIEDHLRFHAQYLLK.

Residues Ser-145, Asp-223, and His-256 each act as charge relay system in the active site.

It belongs to the esterase D family.

The enzyme catalyses S-formylglutathione + H2O = formate + glutathione + H(+). Functionally, serine hydrolase involved in the detoxification of formaldehyde. Hydrolyzes S-formylglutathione to glutathione and formate. This is S-formylglutathione hydrolase YeiG (yeiG) from Shigella boydii serotype 4 (strain Sb227).